The following is a 122-amino-acid chain: Large ribosomal subunit protein uL14 (122 aa).

The protein belongs to the universal ribosomal protein uL14 family. In terms of assembly, part of the 50S ribosomal subunit. Forms a cluster with proteins L3 and L19. In the 70S ribosome, L14 and L19 interact and together make contacts with the 16S rRNA in bridges B5 and B8.

Binds to 23S rRNA. Forms part of two intersubunit bridges in the 70S ribosome. This chain is Large ribosomal subunit protein uL14, found in Mycoplasmopsis agalactiae (strain NCTC 10123 / CIP 59.7 / PG2) (Mycoplasma agalactiae).